We begin with the raw amino-acid sequence, 162 residues long: Caveolin-2 (162 aa).

At 1 to 86 (MGLETEKADV…FEISKYVMYK (86 aa)) the chain is on the cytoplasmic side. Tyr-19 is modified (phosphotyrosine; by SRC). Phosphoserine is present on residues Ser-20 and Ser-23. The residue at position 27 (Tyr-27) is a Phosphotyrosine; by SRC. The residue at position 36 (Ser-36) is a Phosphoserine. Positions 87–107 (FLTVFLAIPLAFIAGILFATL) form an intramembrane region, helical. The Cytoplasmic segment spans residues 108-162 (SCLHIWILMPFVKTCLMVLPSVQTIWKSVTDVIIAPLCTSVGRCFSSVSLQLSQD).

Belongs to the caveolin family. In terms of assembly, monomer or homodimer. Interacts with CAV1; the interaction forms a stable heterooligomeric complex that is required for targeting to lipid rafts and for caveolae formation. Tyrosine phosphorylated forms do not form heterooligomers with the Tyr-19-phosphorylated form existing as a monomer or dimer, and the Tyr-27-form as a monomer only. Interacts (tyrosine phosphorylated form) with the SH2 domain-containing proteins, RASA1, NCK1 and SRC. Interacts (tyrosine phosphorylated form) with INSR, the interaction (Tyr-27-phosphorylated form) is increased on insulin stimulation. Interacts (Tyr-19 phosphorylated form) with MAPK1 (phosphorylated form); the interaction, promoted by insulin, leads to nuclear location and MAPK1 activation. Interacts with STAT3; the interaction is increased on insulin-induced tyrosine phosphorylation leading to STAT activation. In terms of processing, phosphorylated on serine and tyrosine residues. CAV1 promotes phosphorylation on Ser-23 which then targets the complex to the plasma membrane, lipid rafts and caveolae. Phosphorylation on Ser-36 appears to modulate mitosis in endothelial cells. Phosphorylation on both Tyr-19 and Tyr-27 is required for insulin-induced 'Ser-727' phosphorylation of STAT3 and its activation. Phosphorylation on Tyr-19 is required for insulin-induced phosphorylation of MAPK1 and DNA binding of STAT3. Tyrosine phosphorylation is induced by both EGF and insulin (By. similarity).

The protein resides in the nucleus. Its subcellular location is the cytoplasm. It is found in the golgi apparatus membrane. The protein localises to the cell membrane. It localises to the membrane. The protein resides in the caveola. In terms of biological role, may act as a scaffolding protein within caveolar membranes. Interacts directly with G-protein alpha subunits and can functionally regulate their activity. Acts as an accessory protein in conjunction with CAV1 in targeting to lipid rafts and driving caveolae formation. The Ser-36 phosphorylated form has a role in modulating mitosis in endothelial cells. Positive regulator of cellular mitogenesis of the MAPK signaling pathway. Required for the insulin-stimulated nuclear translocation and activation of MAPK1 and STAT3, and the subsequent regulation of cell cycle progression. The sequence is that of Caveolin-2 (CAV2) from Pan troglodytes (Chimpanzee).